Consider the following 321-residue polypeptide: Fe-S cluster assembly protein DRE2 (321 aa).

The segment at M1–R161 is N-terminal SAM-like domain. A disordered region spans residues P123–N168. Residues P139–T156 show a composition bias toward low complexity. Residues P162–D197 are linker. [2Fe-2S] cluster-binding residues include C203, C219, C222, and C224. Positions C203–C224 are fe-S binding site A. Positions 285, 288, 296, and 299 each coordinate [4Fe-4S] cluster. 2 short sequence motifs (cx2C motif) span residues C285 to C288 and C296 to C299. The fe-S binding site B stretch occupies residues C285–C299.

It belongs to the anamorsin family. As to quaternary structure, monomer. Interacts with TAH18. Interacts with MIA40. Requires [2Fe-2S] cluster as cofactor. [4Fe-4S] cluster serves as cofactor.

The protein localises to the cytoplasm. The protein resides in the mitochondrion intermembrane space. Functionally, component of the cytosolic iron-sulfur (Fe-S) protein assembly (CIA) machinery required for the maturation of extramitochondrial Fe-S proteins. Part of an electron transfer chain functioning in an early step of cytosolic Fe-S biogenesis, facilitating the de novo assembly of a [4Fe-4S] cluster on the scaffold complex CFD1-NBP35. Electrons are transferred to DRE2 from NADPH via the FAD- and FMN-containing protein TAH18. TAH18-DRE2 are also required for the assembly of the diferric tyrosyl radical cofactor of ribonucleotide reductase (RNR), probably by providing electrons for reduction during radical cofactor maturation in the catalytic small subunit RNR2. This chain is Fe-S cluster assembly protein DRE2, found in Cryptococcus neoformans var. neoformans serotype D (strain B-3501A) (Filobasidiella neoformans).